A 235-amino-acid chain; its full sequence is Nitrile hydratase subunit beta (235 aa).

Belongs to the nitrile hydratase subunit beta family. As to quaternary structure, heterodimer of an alpha and a beta chain.

The enzyme catalyses an aliphatic primary amide = an aliphatic nitrile + H2O. Its function is as follows. NHase catalyzes the hydration of various nitrile compounds to the corresponding amides. The chain is Nitrile hydratase subunit beta (nthB) from Rhodococcus sp.